Here is a 447-residue protein sequence, read N- to C-terminus: Putative branched-chain amino acid carrier protein SH1502 (447 aa).

13 consecutive transmembrane segments (helical) span residues 6–26, 40–60, 74–94, 116–136, 143–163, 193–213, 229–249, 270–287, 290–310, 328–348, 350–370, 382–402, and 417–437; these read WIVG…IFPP, VIAF…VGAL, PKFS…LFAI, LVLF…CINP, IGSL…IKGF, GYLT…VNAI, VMSG…LGFI, VGAY…GVFG, LLGI…IVSV, IFFT…VISM, VPVL…ILLA, IPIA…NGWV, and LEWF…AKFV.

This sequence belongs to the branched chain amino acid transporter family.

The protein resides in the cell membrane. Its function is as follows. Component of the transport system for branched-chain amino acids (leucine, isoleucine and valine), which is coupled to a proton motive force. The sequence is that of Putative branched-chain amino acid carrier protein SH1502 from Staphylococcus haemolyticus (strain JCSC1435).